We begin with the raw amino-acid sequence, 1392 residues long: DNA-directed RNA polymerase subunit beta (1392 aa).

Residues 1372–1392 (LSSYAEEDPDEGPEALPEAAE) form a disordered region.

The protein belongs to the RNA polymerase beta chain family. As to quaternary structure, the RNAP catalytic core consists of 2 alpha, 1 beta, 1 beta' and 1 omega subunit. When a sigma factor is associated with the core the holoenzyme is formed, which can initiate transcription.

The catalysed reaction is RNA(n) + a ribonucleoside 5'-triphosphate = RNA(n+1) + diphosphate. Its function is as follows. DNA-dependent RNA polymerase catalyzes the transcription of DNA into RNA using the four ribonucleoside triphosphates as substrates. The protein is DNA-directed RNA polymerase subunit beta of Sphingopyxis alaskensis (strain DSM 13593 / LMG 18877 / RB2256) (Sphingomonas alaskensis).